A 1311-amino-acid chain; its full sequence is AF4/FMR2 family member 2 (1311 aa).

Disordered regions lie at residues 94 to 187 (LVGI…LTQD), 204 to 229 (PQIG…GEDA), and 377 to 417 (TAGH…TKSV). Polar residues predominate over residues 101–111 (SVPQNPNNKNE). The span at 155-164 (SKPEWSRDSH) shows a compositional bias: basic and acidic residues. Positions 165 to 187 (NPSTVLASQASGQPNKMQTLTQD) are enriched in polar residues. Polar residues-rich tracts occupy residues 377–396 (TAGH…SQHL) and 403–417 (QKWN…TKSV). Ser-430 carries the phosphoserine modification. Disordered stretches follow at residues 457-530 (KAKP…KWQL), 574-726 (TNAS…DQEE), 818-867 (SLHA…IPEK), and 881-943 (PPCI…DKNI). Residues 465-477 (VNPPLATPQPPPA) show a composition bias toward pro residues. Positions 478–491 (VQASGGSGSSSESE) are enriched in low complexity. Thr-517 carries the phosphothreonine modification. Over residues 582-597 (EPKERPLLSLIREKAR) the composition is skewed to basic and acidic residues. Polar residues predominate over residues 615–625 (STTSETVSQRT). Residues 655-668 (PKEKESVELHDPPR) show a composition bias toward basic and acidic residues. The span at 669–679 (GRNKATAHKPA) shows a compositional bias: basic residues. A compositionally biased stretch (basic and acidic residues) spans 857–867 (PIEVAEKIPEK). Composition is skewed to pro residues over residues 883-892 (CISPAPPHKP) and 913-922 (FPPPLSPLPE).

This sequence belongs to the AF4 family. In terms of tissue distribution, brain (most abundant in hippocampus and amygdala), placenta and lung.

The protein resides in the nucleus speckle. Functionally, RNA-binding protein. Might be involved in alternative splicing regulation through an interaction with G-quartet RNA structure. This is AF4/FMR2 family member 2 from Homo sapiens (Human).